The sequence spans 119 residues: uncharacterized protein (119 aa).

This is an uncharacterized protein from Escherichia coli (Bacteriophage T4).